The primary structure comprises 234 residues: Large ribosomal subunit protein uL1 (234 aa).

It belongs to the universal ribosomal protein uL1 family. As to quaternary structure, part of the 50S ribosomal subunit.

Functionally, binds directly to 23S rRNA. The L1 stalk is quite mobile in the ribosome, and is involved in E site tRNA release. Its function is as follows. Protein L1 is also a translational repressor protein, it controls the translation of the L11 operon by binding to its mRNA. In Klebsiella pneumoniae subsp. pneumoniae (strain ATCC 700721 / MGH 78578), this protein is Large ribosomal subunit protein uL1.